The chain runs to 265 residues: Glutamate racemase (265 aa).

Residues 12–13 (DS) and 44–45 (YG) each bind substrate. The active-site Proton donor/acceptor is cysteine 75. 76–77 (NT) serves as a coordination point for substrate. Cysteine 186 (proton donor/acceptor) is an active-site residue. Residue 187 to 188 (TH) participates in substrate binding.

Belongs to the aspartate/glutamate racemases family.

The enzyme catalyses L-glutamate = D-glutamate. Its pathway is cell wall biogenesis; peptidoglycan biosynthesis. In terms of biological role, provides the (R)-glutamate required for cell wall biosynthesis. The sequence is that of Glutamate racemase from Pseudomonas putida (strain ATCC 47054 / DSM 6125 / CFBP 8728 / NCIMB 11950 / KT2440).